We begin with the raw amino-acid sequence, 307 residues long: UDP-N-acetylenolpyruvoylglucosamine reductase (307 aa).

The region spanning 33 to 198 is the FAD-binding PCMH-type domain; that stretch reads KVGGPVDILV…LEAILKLSLG (166 aa). Residue Arg-177 is part of the active site. Residue Ser-227 is the Proton donor of the active site. Residue Glu-297 is part of the active site.

Belongs to the MurB family. It depends on FAD as a cofactor.

Its subcellular location is the cytoplasm. The enzyme catalyses UDP-N-acetyl-alpha-D-muramate + NADP(+) = UDP-N-acetyl-3-O-(1-carboxyvinyl)-alpha-D-glucosamine + NADPH + H(+). It functions in the pathway cell wall biogenesis; peptidoglycan biosynthesis. In terms of biological role, cell wall formation. This Clostridium tetani (strain Massachusetts / E88) protein is UDP-N-acetylenolpyruvoylglucosamine reductase.